The chain runs to 180 residues: Protein GrpE (180 aa).

The segment covering 1–19 has biased composition (basic and acidic residues); sequence MAEKKRAQEQEKVQEDQKM. Positions 1 to 25 are disordered; sequence MAEKKRAQEQEKVQEDQKMQNEQNE.

This sequence belongs to the GrpE family. Homodimer.

The protein localises to the cytoplasm. Participates actively in the response to hyperosmotic and heat shock by preventing the aggregation of stress-denatured proteins, in association with DnaK and GrpE. It is the nucleotide exchange factor for DnaK and may function as a thermosensor. Unfolded proteins bind initially to DnaJ; upon interaction with the DnaJ-bound protein, DnaK hydrolyzes its bound ATP, resulting in the formation of a stable complex. GrpE releases ADP from DnaK; ATP binding to DnaK triggers the release of the substrate protein, thus completing the reaction cycle. Several rounds of ATP-dependent interactions between DnaJ, DnaK and GrpE are required for fully efficient folding. This Nitratiruptor sp. (strain SB155-2) protein is Protein GrpE.